The following is a 395-amino-acid chain: Chaperone protein DnaJ 2 (395 aa).

The region spanning 10 to 75 is the J domain; sequence NYYADLGVSS…KKRKEYDELK (66 aa). The segment at 165–242 adopts a CR-type zinc-finger fold; it reads GTTIPVELTG…CHGRGTVRKS (78 aa). The Zn(2+) site is built by Cys178, Cys181, Cys194, Cys197, Cys216, Cys219, Cys230, and Cys233. CXXCXGXG motif repeat units lie at residues 178–185, 194–201, 216–223, and 230–237; these read CNTCHGSG, CGTCDGTG, CATCGGTG, and CDNCHGRG.

It belongs to the DnaJ family. As to quaternary structure, homodimer. Zn(2+) is required as a cofactor.

The protein localises to the cytoplasm. Participates actively in the response to hyperosmotic and heat shock by preventing the aggregation of stress-denatured proteins and by disaggregating proteins, also in an autonomous, DnaK-independent fashion. Unfolded proteins bind initially to DnaJ; upon interaction with the DnaJ-bound protein, DnaK hydrolyzes its bound ATP, resulting in the formation of a stable complex. GrpE releases ADP from DnaK; ATP binding to DnaK triggers the release of the substrate protein, thus completing the reaction cycle. Several rounds of ATP-dependent interactions between DnaJ, DnaK and GrpE are required for fully efficient folding. Also involved, together with DnaK and GrpE, in the DNA replication of plasmids through activation of initiation proteins. The polypeptide is Chaperone protein DnaJ 2 (Corynebacterium glutamicum (strain ATCC 13032 / DSM 20300 / JCM 1318 / BCRC 11384 / CCUG 27702 / LMG 3730 / NBRC 12168 / NCIMB 10025 / NRRL B-2784 / 534)).